We begin with the raw amino-acid sequence, 77 residues long: Secapin-2 (77 aa).

The signal sequence occupies residues 1–32 (MKNYSKNATYLITVLLFSFVTMLLIIPSKCEA). Residues 33-52 (VSNDMQPLEARTADLVQQPR) constitute a propeptide that is removed on maturation. C61 and C72 are oxidised to a cystine. P77 carries the proline amide modification.

It belongs to the secapin family. As to expression, expressed by the venom gland.

It localises to the secreted. Serine protease inhibitor which exhibits antifibrinolytic, antielastolytic and antimicrobial activities. Displays antimicrobial activity against bacteria and fungi. Likely functions in the innate immune response to microbial infection and possibly in the venom, as an antifibrinolytic agent. Induces hyperalgesia and edema mediated by leukotrienes when injected into mice. Does not induce hemolytic activity, mast cell degranulation, or chemotactic activity for polymorphonucleated leukocytes (PMNL). The protein is Secapin-2 of Apis mellifera (Honeybee).